The sequence spans 781 residues: Catenin beta-1 (781 aa).

Position 2 is an N-acetylalanine (Ala-2). Residues 2–23 form an interaction with VCL region; sequence ATQADLMELDMAMEPDRKAAVS. At Ser-23 the chain carries Phosphoserine; by GSK3-beta; alternate. The O-linked (GlcNAc) serine; alternate glycan is linked to Ser-23. Ser-29 bears the Phosphoserine; by GSK3-beta mark. A phosphoserine; by GSK3-beta and HIPK2 mark is found at Ser-33 and Ser-37. The segment at 34–57 is disordered; that stretch reads GIHSGATTTAPSLSGKGNPEEEDV. The residue at position 41 (Thr-41) is a Phosphothreonine; by GSK3-beta. Ser-45 is subject to Phosphoserine. Residue Lys-49 is modified to N6-acetyllysine. Tyr-64 bears the Phosphotyrosine; by PTK6 mark. Phosphotyrosine; by FYN and PTK6 is present on Tyr-142. ARM repeat units lie at residues 151–191, 193–234, 235–276, 277–318, 319–360, 361–389, 400–441, 442–484, 489–530, 531–571, 594–636, and 637–666; these read RAIP…IMRS, QMVS…IFKS, GGIP…VRLA, GGLQ…ILAS, GGPQ…IVEA, GGMQ…RNLS, GLLG…VCQV, GGIE…AQNA, YGLP…LREQ, GAIP…EIVE, NTIP…AEGA, and TAPL…SEDK. The interval 156 to 178 is interaction with BCL9; it reads LTKLLNDEDQVVVNKAAVMVHQL. Residue Ser-191 is modified to Phosphoserine; by CDK5. Ser-246 bears the Phosphoserine; by CDK5 mark. The residue at position 331 (Tyr-331) is a Phosphotyrosine; by PTK6. Tyr-333 carries the phosphotyrosine; by SRC and PTK6 modification. Residue Ser-552 is modified to Phosphoserine. Position 556 is a (Microbial infection) Phosphothreonine (Thr-556). Phosphothreonine is present on Thr-556. Cys-619 is subject to S-nitrosocysteine. A Phosphoserine modification is found at Ser-675. A disordered region spans residues 705–781; sequence EPLGYRQDDP…NQLAWFDTDL (77 aa). The span at 734-745 shows a compositional bias: basic and acidic residues; the sequence is MMEHEMGGHHPG. Residues 772–781 are interaction with SCRIB; that stretch reads NQLAWFDTDL.

This sequence belongs to the beta-catenin family. Two separate complex-associated pools are found in the cytoplasm. The majority is present as component of an E-cadherin:catenin adhesion complex composed of at least E-cadherin/CDH1 and beta-catenin/CTNNB1, and possibly alpha-catenin/CTNNA1; the complex is located to adherens junctions. The stable association of CTNNA1 is controversial as CTNNA1 was shown not to bind to F-actin when assembled in the complex. Alternatively, the CTNNA1-containing complex may be linked to F-actin by other proteins such as LIMA1. Another cytoplasmic pool is part of a large complex containing AXIN1, AXIN2, APC, CSNK1A1 and GSK3B that promotes phosphorylation on N-terminal Ser and Thr residues and ubiquitination of CTNNB1 via BTRC and its subsequent degradation by the proteasome. Wnt-dependent activation of DVL antagonizes the action of GSK3B. When GSK3B activity is inhibited the complex dissociates, CTNNB1 is dephosphorylated and is no longer targeted for destruction. The stabilized protein translocates to the nucleus, where it binds TCF/LEF-1 family members, BCL9, BCL9L and possibly also RUVBL1 and CHD8. Binds CTNNBIP and EP300. CTNNB1 forms a ternary complex with LEF1 and EP300 that is disrupted by CTNNBIP1 binding. Interacts with TAX1BP3 (via the PDZ domain); this interaction inhibits the transcriptional activity of CTNNB1. Interacts with AJAP1, BAIAP1, CARM1, CTNNA3, CXADR and PCDH11Y. Binds NHERF1. Interacts with GLIS2 and MUC1. Interacts with SLC30A9. Interacts with XIRP1. Interacts directly with AXIN1; the interaction is regulated by CDK2 phosphorylation of AXIN1. Interacts with SCRIB. Interacts with RAPGEF2. Interacts with PTPRU (via the cytoplasmic juxtamembrane domain). Interacts with EMD. Interacts with TNIK and TCF7L2. Interacts with SESTD1 and TRPC4. Interacts with CAV1. Interacts with TRPV4. The TRPV4 and CTNNB1 complex can interact with CDH1. Interacts with VCL. Interacts with PTPRJ. Interacts with PKT7 and CDK2. Interacts with FAT1 (via the cytoplasmic domain). Interacts with NANOS1 and NDRG2. Interacts with isoform 1 of NEK2. Interacts with both isoform 1 and isoform 2 of CDK5. Interacts with PTK6. Interacts with SOX7; this interaction may lead to proteasomal degradation of active CTNNB1 and thus inhibition of Wnt/beta-catenin-stimulated transcription. Identified in a complex with HINT1 and MITF. Interacts with FHIT. The CTNNB1 and TCF7L2/TCF4 complex interacts with PML (isoform PML-4). Interacts with FERMT2. Identified in a complex with TCF7L2/TCF4 and FERMT2. Interacts with RORA. May interact with P-cadherin/CDH3. Interacts with RNF220. Interacts with CTNND2. Interacts (via the C-terminal region) with CBY1. The complex composed, at least, of APC, CTNNB1 and GSK3B interacts with JPT1; the interaction requires the inactive form of GSK3B (phosphorylated at 'Ser-9'). Interacts with DLG5. Interacts with FAM53B; promoting translocation to the nucleus. Interacts with TMEM170B. Interacts with AHI1. Interacts with GID8. Component of an cadherin:catenin adhesion complex composed of at least of CDH26, beta-catenin/CTNNB1, alpha-catenin/CTNNA1 and p120 catenin/CTNND1. Forms a complex comprising APPL1, RUVBL2, APPL2, HDAC1 and HDAC2. Interacts with IRF2BPL; mediates the ubiquitination and degradation of CTNNB1. Interacts with AMFR. Interacts with LMBR1L. Interacts with SOX30; prevents interaction of CTNNB1 with TCF7L2/TCF4 and leads to inhibition of Wnt signaling. Interacts with SOX9; inhibiting CTNNB1 activity by competing with the binding sites of TCF/LEF within CTNNB1, thereby inhibiting the Wnt signaling. Interacts with SPN/CD43 cytoplasmic tail. Interacts (when phosphorylated at Tyr-333) with isoform M2 of PKM (PKM2); promoting transcription activation. Interacts with PKP2 (via HEAD domain). Interacts with CDH1. Interacts (when unphosphorylated) with FLYWCH1, perhaps preventing interaction of CTNNB1 with TCF4, and thereby regulating transcription activation; phosphorylation of CTNNB1 may inhibit the interaction. Interacts (via the central armadillo domains) with probable transcriptional regulator ADNP (via N-terminal region); interaction is direct and stabilizes CTNNB1 by modulating its phosphorylation by glycogen synthase kinase-3 beta GSK3B. Interacts with NR5A2. Interacts with DSG2; the interaction promotes localization of CTNNB1 at cell junctions thus reducing its nuclear localization and subsequent transcription of CTNNB1/TCF-target genes. As to quaternary structure, (Microbial infection) Interacts with herpes virus 8 protein vPK; this interaction inhibits the Wnt signaling pathway. In terms of processing, phosphorylation at Ser-552 by AMPK promotes stabilization of the protein, enhancing TCF/LEF-mediated transcription. Phosphorylation by GSK3B requires prior phosphorylation of Ser-45 by another kinase. Phosphorylation proceeds then from Thr-41 to Ser-37 and Ser-33. Phosphorylated by NEK2. EGF stimulates tyrosine phosphorylation. Phosphorylated on Ser-33 and Ser-37 by HIPK2 and GSK3B, this phosphorylation triggers proteasomal degradation. Phosphorylation on Ser-191 and Ser-246 by CDK5. Phosphorylation by CDK2 regulates insulin internalization. Phosphorylation by PTK6 at Tyr-64, Tyr-142, Tyr-331 and/or Tyr-333 with the predominant site at Tyr-64 is not essential for inhibition of transcriptional activity. Phosphorylation by SRC at Tyr-333 promotes interaction with isoform M2 of PKM (PKM2); promoting transcription activation. Ubiquitinated by the SCF(BTRC) E3 ligase complex when phosphorylated by GSK3B, leading to its degradation. Ubiquitinated by a E3 ubiquitin ligase complex containing UBE2D1, SIAH1, CACYBP/SIP, SKP1, APC and TBL1X, leading to its subsequent proteasomal degradation. Ubiquitinated and degraded following interaction with SOX9. Ubiquitinated via 'Lys-11'- and 'Lys-29'-linked ubiquitin chains by UBR5, leading to its stabilization. Post-translationally, S-nitrosylation at Cys-619 within adherens junctions promotes VEGF-induced, NO-dependent endothelial cell permeability by disrupting interaction with E-cadherin, thus mediating disassembly adherens junctions. In terms of processing, O-glycosylation at Ser-23 decreases nuclear localization and transcriptional activity, and increases localization to the plasma membrane and interaction with E-cadherin CDH1. Deacetylated at Lys-49 by SIRT1. Post-translationally, phosphorylated at Thr-556 by herpes virus 1/HHV-1 leading to CTNNB1 inhibition. As to expression, expressed in several hair follicle cell types: basal and peripheral matrix cells, and cells of the outer and inner root sheaths. Expressed in colon. Present in cortical neurons (at protein level). Expressed in breast cancer tissues (at protein level).

Its subcellular location is the cytoplasm. It localises to the nucleus. The protein resides in the cytoskeleton. The protein localises to the cell junction. It is found in the adherens junction. Its subcellular location is the cell membrane. It localises to the microtubule organizing center. The protein resides in the centrosome. The protein localises to the spindle pole. It is found in the synapse. Its subcellular location is the cilium basal body. In terms of biological role, key downstream component of the canonical Wnt signaling pathway. In the absence of Wnt, forms a complex with AXIN1, AXIN2, APC, CSNK1A1 and GSK3B that promotes phosphorylation on N-terminal Ser and Thr residues and ubiquitination of CTNNB1 via BTRC and its subsequent degradation by the proteasome. In the presence of Wnt ligand, CTNNB1 is not ubiquitinated and accumulates in the nucleus, where it acts as a coactivator for transcription factors of the TCF/LEF family, leading to activate Wnt responsive genes. Also acts as a coactivator for other transcription factors, such as NR5A2. Promotes epithelial to mesenchymal transition/mesenchymal to epithelial transition (EMT/MET) via driving transcription of CTNNB1/TCF-target genes. Involved in the regulation of cell adhesion, as component of an E-cadherin:catenin adhesion complex. Acts as a negative regulator of centrosome cohesion. Involved in the CDK2/PTPN6/CTNNB1/CEACAM1 pathway of insulin internalization. Blocks anoikis of malignant kidney and intestinal epithelial cells and promotes their anchorage-independent growth by down-regulating DAPK2. Disrupts PML function and PML-NB formation by inhibiting RANBP2-mediated sumoylation of PML. Promotes neurogenesis by maintaining sympathetic neuroblasts within the cell cycle. Involved in chondrocyte differentiation via interaction with SOX9: SOX9-binding competes with the binding sites of TCF/LEF within CTNNB1, thereby inhibiting the Wnt signaling. Acts as a positive regulator of odontoblast differentiation during mesenchymal tooth germ formation, via promoting the transcription of differentiation factors such as LEF1, BMP2 and BMP4. Activity is repressed in a MSX1-mediated manner at the bell stage of mesenchymal tooth germ formation which prevents premature differentiation of odontoblasts. The chain is Catenin beta-1 from Homo sapiens (Human).